The sequence spans 446 residues: D(1A) dopamine receptor (446 aa).

Residues 1-23 (MRTLNTSTMDGTGLVVERDFSFR) are Extracellular-facing. N-linked (GlcNAc...) asparagine glycosylation occurs at Asn5. A helical transmembrane segment spans residues 24–49 (ILTACFLSLLILSTLLGNTLVCAAVI). At 50-60 (RFRHLRSKVTN) the chain is on the cytoplasmic side. A helical membrane pass occupies residues 61 to 87 (FFVISLAVSDLLVAVLVMPWKAVAEIA). The Extracellular segment spans residues 88–96 (GFWPFGSFC). Cys96 and Cys186 are oxidised to a cystine. A helical membrane pass occupies residues 97-119 (NIWVAFDIMCSTASILNLCVISV). The Cytoplasmic segment spans residues 120–138 (DRYWAISSPFRYERKMTPK). A helical transmembrane segment spans residues 139 to 163 (AAFILISVAWTLSVLISFIPVQLSW). The Extracellular segment spans residues 164-192 (HKAKPTSPSDGNVTSLGKTTHNCDSSLSR). The helical transmembrane segment at 193-218 (TYAISSSLISFYIPVAIMIVTYTRIY) threads the bilayer. Residues 219–272 (RIAQKQIRRISALERAAVHAKNCQTTAGNGNPAECSQPESSFKMSFKRETKVLK) are Cytoplasmic-facing. Residues 273–299 (TLSVIMGVFVCCWLPFFILNCMVPFCG) traverse the membrane as a helical segment. At 300–312 (SGETKPFCIDSIT) the chain is on the extracellular side. A helical membrane pass occupies residues 313-337 (FDVFVWFGWANSSLNPIIYAFNADF). The Cytoplasmic segment spans residues 338-446 (RKAFSTLLGC…PITQNGQHPT (109 aa)). 2 S-palmitoyl cysteine lipidation sites follow: Cys347 and Cys351.

The protein belongs to the G-protein coupled receptor 1 family. Interacts with DNAJC14 via its C-terminus. Interacts with DRD2. Interacts with DORIP1.

The protein resides in the cell membrane. Its subcellular location is the endoplasmic reticulum membrane. The protein localises to the cell projection. It localises to the cilium membrane. It is found in the dendrite. The protein resides in the dendritic spine. Functionally, dopamine receptor whose activity is mediated by G proteins which activate adenylyl cyclase. The chain is D(1A) dopamine receptor (DRD1) from Sus scrofa (Pig).